The chain runs to 271 residues: uncharacterized protein (271 aa).

This is an uncharacterized protein from Galliformes (FAdV-1).